Reading from the N-terminus, the 164-residue chain is Large ribosomal subunit protein uL15 (164 aa).

The interval Met-1–Gly-52 is disordered. Residues Arg-21 to Gly-37 are compositionally biased toward gly residues.

It belongs to the universal ribosomal protein uL15 family. Part of the 50S ribosomal subunit.

Functionally, binds to the 23S rRNA. This is Large ribosomal subunit protein uL15 from Anaeromyxobacter sp. (strain Fw109-5).